Consider the following 243-residue polypeptide: 4-hydroxy-tetrahydrodipicolinate reductase (243 aa).

Residues 9–14, 78–80, and 104–107 contribute to the NAD(+) site; these read GANGKM, GTS, and APNF. Residue His-134 is the Proton donor/acceptor of the active site. Residue His-135 coordinates (S)-2,3,4,5-tetrahydrodipicolinate. The active-site Proton donor is Lys-138. 144-145 lines the (S)-2,3,4,5-tetrahydrodipicolinate pocket; it reads GT.

The protein belongs to the DapB family.

It is found in the cytoplasm. The enzyme catalyses (S)-2,3,4,5-tetrahydrodipicolinate + NAD(+) + H2O = (2S,4S)-4-hydroxy-2,3,4,5-tetrahydrodipicolinate + NADH + H(+). The catalysed reaction is (S)-2,3,4,5-tetrahydrodipicolinate + NADP(+) + H2O = (2S,4S)-4-hydroxy-2,3,4,5-tetrahydrodipicolinate + NADPH + H(+). It functions in the pathway amino-acid biosynthesis; L-lysine biosynthesis via DAP pathway; (S)-tetrahydrodipicolinate from L-aspartate: step 4/4. Catalyzes the conversion of 4-hydroxy-tetrahydrodipicolinate (HTPA) to tetrahydrodipicolinate. This chain is 4-hydroxy-tetrahydrodipicolinate reductase, found in Legionella pneumophila (strain Paris).